The chain runs to 289 residues: Protease HtpX (289 aa).

Transmembrane regions (helical) follow at residues 5–25 (IVLF…VMSL) and 33–53 (MSGL…ISLL). His-140 contributes to the Zn(2+) binding site. Glu-141 is a catalytic residue. His-144 is a binding site for Zn(2+). Helical transmembrane passes span 155 to 175 (LLQG…GGFI) and 193 to 213 (GIVL…TMWF). Residue Glu-218 participates in Zn(2+) binding.

It belongs to the peptidase M48B family. Requires Zn(2+) as cofactor.

It is found in the cell inner membrane. In Xylella fastidiosa (strain M23), this protein is Protease HtpX.